Consider the following 272-residue polypeptide: NH(3)-dependent NAD(+) synthetase (272 aa).

Residue 43-50 (GLSGGQDS) coordinates ATP. Aspartate 49 lines the Mg(2+) pocket. Arginine 138 lines the deamido-NAD(+) pocket. Residue threonine 158 participates in ATP binding. A Mg(2+)-binding site is contributed by glutamate 163. Lysine 171 and aspartate 178 together coordinate deamido-NAD(+). ATP contacts are provided by lysine 187 and threonine 209. 258–259 (HK) lines the deamido-NAD(+) pocket.

It belongs to the NAD synthetase family. As to quaternary structure, homodimer.

The enzyme catalyses deamido-NAD(+) + NH4(+) + ATP = AMP + diphosphate + NAD(+) + H(+). Its pathway is cofactor biosynthesis; NAD(+) biosynthesis; NAD(+) from deamido-NAD(+) (ammonia route): step 1/1. Catalyzes the ATP-dependent amidation of deamido-NAD to form NAD. Uses ammonia as a nitrogen source. The sequence is that of NH(3)-dependent NAD(+) synthetase from Halalkalibacterium halodurans (strain ATCC BAA-125 / DSM 18197 / FERM 7344 / JCM 9153 / C-125) (Bacillus halodurans).